Consider the following 635-residue polypeptide: 1-deoxy-D-xylulose-5-phosphate synthase (635 aa).

Thiamine diphosphate contacts are provided by residues His-72 and 113–115; that span reads GHA. Asp-144 contacts Mg(2+). Thiamine diphosphate-binding positions include 145–146, Asn-174, Tyr-286, and Glu-369; that span reads GA. Asn-174 contacts Mg(2+).

It belongs to the transketolase family. DXPS subfamily. In terms of assembly, homodimer. Mg(2+) serves as cofactor. Thiamine diphosphate is required as a cofactor.

It carries out the reaction D-glyceraldehyde 3-phosphate + pyruvate + H(+) = 1-deoxy-D-xylulose 5-phosphate + CO2. It participates in metabolic intermediate biosynthesis; 1-deoxy-D-xylulose 5-phosphate biosynthesis; 1-deoxy-D-xylulose 5-phosphate from D-glyceraldehyde 3-phosphate and pyruvate: step 1/1. Catalyzes the acyloin condensation reaction between C atoms 2 and 3 of pyruvate and glyceraldehyde 3-phosphate to yield 1-deoxy-D-xylulose-5-phosphate (DXP). This is 1-deoxy-D-xylulose-5-phosphate synthase from Gloeothece citriformis (strain PCC 7424) (Cyanothece sp. (strain PCC 7424)).